Reading from the N-terminus, the 445-residue chain is Tubulin beta chain (445 aa).

GTP is bound by residues Q11, E69, S138, G142, T143, G144, N204, and N226. Residue E69 participates in Mg(2+) binding.

This sequence belongs to the tubulin family. Dimer of alpha and beta chains. A typical microtubule is a hollow water-filled tube with an outer diameter of 25 nm and an inner diameter of 15 nM. Alpha-beta heterodimers associate head-to-tail to form protofilaments running lengthwise along the microtubule wall with the beta-tubulin subunit facing the microtubule plus end conferring a structural polarity. Microtubules usually have 13 protofilaments but different protofilament numbers can be found in some organisms and specialized cells. Mg(2+) is required as a cofactor.

The protein localises to the cytoplasm. Its subcellular location is the cytoskeleton. Functionally, tubulin is the major constituent of microtubules, a cylinder consisting of laterally associated linear protofilaments composed of alpha- and beta-tubulin heterodimers. Microtubules grow by the addition of GTP-tubulin dimers to the microtubule end, where a stabilizing cap forms. Below the cap, tubulin dimers are in GDP-bound state, owing to GTPase activity of alpha-tubulin. In Schizophyllum commune (Split gill fungus), this protein is Tubulin beta chain (TUB-2).